Reading from the N-terminus, the 432-residue chain is Adenylosuccinate synthetase (432 aa).

Residues 13–19 (GDEGKGK) and 41–43 (GHT) contribute to the GTP site. The active-site Proton acceptor is aspartate 14. Aspartate 14 and glycine 41 together coordinate Mg(2+). Residues 14-17 (DEGK), 39-42 (NAGH), threonine 130, arginine 144, glutamine 225, threonine 240, and arginine 304 each bind IMP. Histidine 42 acts as the Proton donor in catalysis. 300–306 (ATTGRRR) lines the substrate pocket. GTP is bound by residues arginine 306, 332–334 (KLD), and 414–416 (STG).

This sequence belongs to the adenylosuccinate synthetase family. In terms of assembly, homodimer. Requires Mg(2+) as cofactor.

The protein resides in the cytoplasm. It catalyses the reaction IMP + L-aspartate + GTP = N(6)-(1,2-dicarboxyethyl)-AMP + GDP + phosphate + 2 H(+). It functions in the pathway purine metabolism; AMP biosynthesis via de novo pathway; AMP from IMP: step 1/2. Functionally, plays an important role in the de novo pathway of purine nucleotide biosynthesis. Catalyzes the first committed step in the biosynthesis of AMP from IMP. The chain is Adenylosuccinate synthetase from Methylococcus capsulatus (strain ATCC 33009 / NCIMB 11132 / Bath).